Consider the following 338-residue polypeptide: UDP-glucose 4-epimerase (338 aa).

Residues 11 to 12 (FI), 31 to 36 (DNLCNS), 58 to 59 (DI), 80 to 84 (FAGLK), Asn-99, Ser-124, Tyr-149, Lys-153, and Phe-178 each bind NAD(+). Positions 124 and 149 each coordinate substrate. Tyr-149 acts as the Proton acceptor in catalysis. Substrate-binding positions include Asn-179, 199 to 200 (NL), 216 to 218 (SVF), Arg-231, and 292 to 295 (RAGD).

Belongs to the NAD(P)-dependent epimerase/dehydratase family. As to quaternary structure, homodimer. The cofactor is NAD(+).

The catalysed reaction is UDP-alpha-D-glucose = UDP-alpha-D-galactose. It functions in the pathway carbohydrate metabolism; galactose metabolism. In terms of biological role, involved in the metabolism of galactose. Plays an essential role in the incorporation of galactose into meningococcal lipopolysaccharide surface molecules, which are important for pathogenesis. Catalyzes the conversion of UDP-galactose (UDP-Gal) to UDP-glucose (UDP-Glc) through a mechanism involving the transient reduction of NAD. In Neisseria gonorrhoeae, this protein is UDP-glucose 4-epimerase (galE).